A 240-amino-acid polypeptide reads, in one-letter code: MFLKVRAEKRLGNFRLNVDFEMGRDYCVLLGPTGAGKSVFLELIAGIVKPDRGEVRLNGADITPLPPERRGIGFVPQDYALFPHLSVYRNIAYGLRNVERVERDRRVREMAEKLGIAHLLDRKPARLSGGERQRVALARALVIQPRLLLLDEPLSAVDLKTKGVLMEELRFVQREFDVPILHVTHDLIEAAMLADEVAVMLNGRIVEKGKLKELFSAKNGEVAEFLSARNLLLKVSKILD.

Positions 2–227 (FLKVRAEKRL…KNGEVAEFLS (226 aa)) constitute an ABC transporter domain. 31–38 (GPTGAGKS) is an ATP binding site.

The protein belongs to the ABC transporter superfamily. Sulfate/tungstate importer (TC 3.A.1.6) family. As to quaternary structure, the complex is composed of two ATP-binding proteins (WtpC), two transmembrane proteins (WtpB) and a solute-binding protein (WtpA).

Its subcellular location is the cell membrane. It carries out the reaction tungstate(in) + ATP + H2O = tungstate(out) + ADP + phosphate + H(+). Part of the ABC transporter complex WtpABC involved in molybdate/tungstate import. Responsible for energy coupling to the transport system. This Archaeoglobus fulgidus (strain ATCC 49558 / DSM 4304 / JCM 9628 / NBRC 100126 / VC-16) protein is Molybdate/tungstate import ATP-binding protein WtpC (wtpC).